Reading from the N-terminus, the 225-residue chain is C-reactive protein (225 aa).

A signal peptide spans 1 to 19 (MEKLLWCSLVMIGFSQAFA). At Gln20 the chain carries Pyrrolidone carboxylic acid. Residues 24-225 (SKTAFVFPKE…DVFIKPQLWP (202 aa)) enclose the Pentraxin (PTX) domain. An intrachain disulfide couples Cys55 to Cys116. Residues Asn80, Glu157, Gln158, Asp159, and Gln169 each contribute to the Ca(2+) site.

This sequence belongs to the pentraxin family. In terms of assembly, homopentamer. Pentraxin (or pentaxin) have a discoid arrangement of 5 non-covalently bound subunits. Interacts with FCN1; may regulate monocyte activation by FCN1. Ca(2+) serves as cofactor. In terms of tissue distribution, found in plasma.

Its subcellular location is the secreted. Its function is as follows. Displays several functions associated with host defense: it promotes agglutination, bacterial capsular swelling, phagocytosis and complement fixation through its calcium-dependent binding to phosphorylcholine. Can interact with DNA and histones and may scavenge nuclear material released from damaged circulating cells. The protein is C-reactive protein (CRP) of Mesocricetus auratus (Golden hamster).